A 193-amino-acid polypeptide reads, in one-letter code: Ion-translocating oxidoreductase complex subunit A (193 aa).

6 helical membrane-spanning segments follow: residues 4-24, 39-59, 72-92, 102-122, 134-154, and 171-191; these read LLLI…RFLG, LGMG…TWVL, LQTI…EMIV, SLGI…LAVL, LVFA…FAGL, and PIEL…AGLV.

This sequence belongs to the NqrDE/RnfAE family. In terms of assembly, the complex is composed of six subunits: RnfA, RnfB, RnfC, RnfD, RnfE and RnfG.

Its subcellular location is the cell inner membrane. In terms of biological role, part of a membrane-bound complex that couples electron transfer with translocation of ions across the membrane. The sequence is that of Ion-translocating oxidoreductase complex subunit A from Syntrophotalea carbinolica (strain DSM 2380 / NBRC 103641 / GraBd1) (Pelobacter carbinolicus).